The following is a 607-amino-acid chain: UvrABC system protein C (607 aa).

The GIY-YIG domain occupies 15-93; it reads RKPGVYRMLD…IKELKPPYNI (79 aa). Residues 203-238 form the UVR domain; it reads REVADQLSTDMEAAAAALEFEKAALLRDQLAAIQAV. The span at 542–551 shows a compositional bias: basic residues; that stretch reads HRARRGKARK. Positions 542 to 561 are disordered; sequence HRARRGKARKQSTLDEIPGI.

The protein belongs to the UvrC family. Interacts with UvrB in an incision complex.

It is found in the cytoplasm. Its function is as follows. The UvrABC repair system catalyzes the recognition and processing of DNA lesions. UvrC both incises the 5' and 3' sides of the lesion. The N-terminal half is responsible for the 3' incision and the C-terminal half is responsible for the 5' incision. This is UvrABC system protein C from Alcanivorax borkumensis (strain ATCC 700651 / DSM 11573 / NCIMB 13689 / SK2).